The primary structure comprises 473 residues: MMSKINQTDIDRLIELVGGRGNIATVSHCITRLRFVLNQPANARPKEIEQLPMVKGCFTNAGQFQVVIGTNVGDYYQALIASTGQAQVDKEQVKKAARHNMKWHEQLISHFAVIFFPLLPALISGGLILGFRNVIGDLPMSNGQTLAQMYPSLQTIYDFLWLIGEAIFFYLPVGICWSAVKKMGGTPILGIVLGVTLVSPQLMNAYLLGQQLPEVWDFGMFSIAKVGYQAQVIPALLAGLALGVIETRLKRIVPDYLYLVVVPVCSLILAVFLAHALIGPFGRMIGDGVAFAVRHLMTGSFAPIGAALFGFLYAPLVITGVHQTTLAIDLQMIQSMGGTPVWPLIALSNIAQGSAVIGIIISSRKHNEREISVPAAISAWLGVTEPAMYGINLKYRFPMLCAMIGSGLAGLLCGLNGVMANGIGVGGLPGILSIQPSYWQVFALAMAIAIIIPIVLTSFIYQRKYRLGTLDIV.

Residues 1-89 (MMSKINQTDI…IASTGQAQVD (89 aa)) enclose the PTS EIIB type-1 domain. Topologically, residues 1-110 (MMSKINQTDI…MKWHEQLISH (110 aa)) are cytoplasmic. Catalysis depends on Cys-29, which acts as the Phosphocysteine intermediate; for EIIB activity. Cys-29 is modified (phosphocysteine; by EIIA). Residues 109–473 (SHFAVIFFPL…KYRLGTLDIV (365 aa)) form the PTS EIIC type-1 domain. Residues 111-131 (FAVIFFPLLPALISGGLILGF) form a helical membrane-spanning segment. Over 132 to 158 (RNVIGDLPMSNGQTLAQMYPSLQTIYD) the chain is Periplasmic. Residues 159 to 179 (FLWLIGEAIFFYLPVGICWSA) form a helical membrane-spanning segment. Topologically, residues 180-187 (VKKMGGTP) are cytoplasmic. A helical membrane pass occupies residues 188–208 (ILGIVLGVTLVSPQLMNAYLL). At 209 to 225 (GQQLPEVWDFGMFSIAK) the chain is on the periplasmic side. Residues 226–246 (VGYQAQVIPALLAGLALGVIE) traverse the membrane as a helical segment. The Cytoplasmic segment spans residues 247–258 (TRLKRIVPDYLY). A helical transmembrane segment spans residues 259 to 279 (LVVVPVCSLILAVFLAHALIG). The Periplasmic portion of the chain corresponds to 280 to 300 (PFGRMIGDGVAFAVRHLMTGS). A helical membrane pass occupies residues 301–321 (FAPIGAALFGFLYAPLVITGV). Topologically, residues 322–340 (HQTTLAIDLQMIQSMGGTP) are cytoplasmic. The chain crosses the membrane as a helical span at residues 341–361 (VWPLIALSNIAQGSAVIGIII). Residues 362 to 370 (SSRKHNERE) are Periplasmic-facing. Residues 371 to 391 (ISVPAAISAWLGVTEPAMYGI) traverse the membrane as a helical segment. Residues 392 to 398 (NLKYRFP) lie on the Cytoplasmic side of the membrane. A helical membrane pass occupies residues 399 to 419 (MLCAMIGSGLAGLLCGLNGVM). Over 420–440 (ANGIGVGGLPGILSIQPSYWQ) the chain is Periplasmic. The chain crosses the membrane as a helical span at residues 441–461 (VFALAMAIAIIIPIVLTSFIY). Residues 462 to 473 (QRKYRLGTLDIV) are Cytoplasmic-facing.

It is found in the cell inner membrane. It carries out the reaction alpha,alpha-trehalose(out) + N(pros)-phospho-L-histidyl-[protein] = alpha,alpha-trehalose 6-phosphate(in) + L-histidyl-[protein]. In terms of biological role, the phosphoenolpyruvate-dependent sugar phosphotransferase system (sugar PTS), a major carbohydrate active transport system, catalyzes the phosphorylation of incoming sugar substrates concomitantly with their translocation across the cell membrane. This system is involved in trehalose transport at low osmolarity. The sequence is that of PTS system trehalose-specific EIIBC component (treB) from Escherichia coli (strain K12).